A 66-amino-acid polypeptide reads, in one-letter code: Large ribosomal subunit protein bL33c (66 aa).

Belongs to the bacterial ribosomal protein bL33 family.

Its subcellular location is the plastid. The protein localises to the chloroplast. In Citrus sinensis (Sweet orange), this protein is Large ribosomal subunit protein bL33c.